The primary structure comprises 144 residues: Large ribosomal subunit protein uL15 (144 aa).

The disordered stretch occupies residues 1–59 (MRLNTISPAEGSKPTGKRSGRGIGSGLGKTGGVGHKGQKSRSGGRVKPGFEGGQMPIQR). A compositionally biased stretch (gly residues) spans 21–35 (RGIGSGLGKTGGVGH).

It belongs to the universal ribosomal protein uL15 family. In terms of assembly, part of the 50S ribosomal subunit.

Binds to the 23S rRNA. This Alteromonas mediterranea (strain DSM 17117 / CIP 110805 / LMG 28347 / Deep ecotype) protein is Large ribosomal subunit protein uL15.